A 105-amino-acid polypeptide reads, in one-letter code: Large ribosomal subunit protein uL24 (105 aa).

This sequence belongs to the universal ribosomal protein uL24 family. In terms of assembly, part of the 50S ribosomal subunit.

One of two assembly initiator proteins, it binds directly to the 5'-end of the 23S rRNA, where it nucleates assembly of the 50S subunit. Functionally, one of the proteins that surrounds the polypeptide exit tunnel on the outside of the subunit. This chain is Large ribosomal subunit protein uL24, found in Sorangium cellulosum (strain So ce56) (Polyangium cellulosum (strain So ce56)).